A 178-amino-acid chain; its full sequence is Dual-action ribosomal maturation protein DarP (178 aa).

The protein belongs to the DarP family.

Its subcellular location is the cytoplasm. Functionally, member of a network of 50S ribosomal subunit biogenesis factors which assembles along the 30S-50S interface, preventing incorrect 23S rRNA structures from forming. Promotes peptidyl transferase center (PTC) maturation. The chain is Dual-action ribosomal maturation protein DarP from Haemophilus influenzae (strain PittEE).